A 246-amino-acid chain; its full sequence is DNA polymerase sliding clamp (246 aa).

This sequence belongs to the PCNA family. In terms of assembly, homotrimer. The subunits circularize to form a toroid; DNA passes through its center. Replication factor C (RFC) is required to load the toroid on the DNA.

Its function is as follows. Sliding clamp subunit that acts as a moving platform for DNA processing. Responsible for tethering the catalytic subunit of DNA polymerase and other proteins to DNA during high-speed replication. The polypeptide is DNA polymerase sliding clamp (Thermoplasma volcanium (strain ATCC 51530 / DSM 4299 / JCM 9571 / NBRC 15438 / GSS1)).